Here is a 912-residue protein sequence, read N- to C-terminus: Receptor protein kinase WSS1 (912 aa).

Positions 1–27 are cleaved as a signal peptide; the sequence is MGRDARRLPLLPFLLLLLAAAAGVAES. At 28-477 the chain is on the extracellular side; sequence ATDAEAIHDL…AGGGKSKPNT (450 aa). LRR repeat units follow at residues 64–88, 89–111, and 112–134; these read AGKV…LSSL, TSLT…LARM, and GSLA…FLHG. N-linked (GlcNAc...) asparagine glycosylation is found at Asn-159, Asn-170, Asn-196, Asn-256, Asn-286, Asn-371, Asn-376, Asn-387, and Asn-400. LRR repeat units follow at residues 184 to 208, 235 to 261, 281 to 303, 364 to 388, 389 to 411, and 413 to 438; these read LVSL…LSSL, MKSL…TQLE, LMSL…AFAA, SSDV…LANL, TRLA…VLTT, and PSLT…SVNV. Residues 448–472 form a disordered region; sequence SSGSSGGGGGSDGDSSSSDSAGGGK. A helical membrane pass occupies residues 478-498; that stretch reads GMIIGIIVAVIILFACIALLV. The Cytoplasmic portion of the chain corresponds to 499–912; the sequence is HHRKKKNVEK…SFNVPRKYNG (414 aa). Residues 580 to 859 form the Protein kinase domain; sequence FSEDCILGRG…HCVNRLSSLV (280 aa). ATP is bound by residues 586 to 594 and Lys-607; that span reads LGRGGFGVV. Asp-708 (proton acceptor) is an active-site residue.

Belongs to the protein kinase superfamily. Ser/Thr protein kinase family. It depends on Mn(2+) as a cofactor. As to expression, expressed in young and mature leaves.

Its subcellular location is the cell membrane. It carries out the reaction L-seryl-[protein] + ATP = O-phospho-L-seryl-[protein] + ADP + H(+). The enzyme catalyses L-threonyl-[protein] + ATP = O-phospho-L-threonyl-[protein] + ADP + H(+). Its function is as follows. Transmembrane kinase receptor involved in the regulation of reactive oxygen species (ROS) homeostasis, chloroplast development and leaf senescence. The polypeptide is Receptor protein kinase WSS1 (Oryza sativa subsp. japonica (Rice)).